The chain runs to 354 residues: MEKNWFFPPHDGIRLGDLADQIGAELLDATAADRAVRAVAPVYRAKAGDVCYMLSRKSREELQTCSATAIICDKAISSLVPDTIPVLLTAKPHTAFALAGTLLHERAMRPSYNTSERGVSPGAFVDSTARLEAGVEVEPMAVIGAGAEIGSGTRIAAGAMIGPGVRIGRDCTISAGVSILCALIGNNVIIHPGTRIGQDGFGYAPGPTGGMIKIVQVGRVIIQDHVEIGANTTIDRGTMDDTVIGEGTKIDNLVQIGHNVRIGRYCGIVSQVGIAGSAQIGDGVMIGGGVGVNGHTSIGSGAQIAAMSGVASDVPAGERYGGIPARPMRDFLRDVAEMALRSSERQKKKGGKDE.

Catalysis depends on His258, which acts as the Proton acceptor.

The protein belongs to the transferase hexapeptide repeat family. LpxD subfamily. Homotrimer.

The catalysed reaction is a UDP-3-O-[(3R)-3-hydroxyacyl]-alpha-D-glucosamine + a (3R)-hydroxyacyl-[ACP] = a UDP-2-N,3-O-bis[(3R)-3-hydroxyacyl]-alpha-D-glucosamine + holo-[ACP] + H(+). The protein operates within bacterial outer membrane biogenesis; LPS lipid A biosynthesis. Catalyzes the N-acylation of UDP-3-O-acylglucosamine using 3-hydroxyacyl-ACP as the acyl donor. Is involved in the biosynthesis of lipid A, a phosphorylated glycolipid that anchors the lipopolysaccharide to the outer membrane of the cell. The protein is UDP-3-O-acylglucosamine N-acyltransferase of Sinorhizobium medicae (strain WSM419) (Ensifer medicae).